A 271-amino-acid chain; its full sequence is Effector CFEM6 (271 aa).

The N-terminal stretch at 1 to 17 is a signal peptide; that stretch reads MKYSMITLGAFAMMAVA. Positions 18–111 constitute a CFEM domain; the sequence is QLSSLPACGQ…LGPATAVVAS (94 aa). Intrachain disulfides connect Cys25-Cys68, Cys29-Cys63, Cys42-Cys49, and Cys51-Cys84. Asp46 is a heme binding site. Residue Ser247 is the site of GPI-anchor amidated serine attachment. The propeptide at 248-271 is removed in mature form; sequence SAGGARQTAFAGLAAAAGFAAIIL.

This sequence belongs to the RBT5 family.

The protein resides in the cell membrane. It localises to the secreted. Its subcellular location is the host nucleus. It is found in the host cell membrane. The protein localises to the host chloroplast envelope. Appears to function during host infection, and may play a role in suppressing the host immune response. The sequence is that of Effector CFEM6 from Marssonina brunnea f. sp. multigermtubi (strain MB_m1) (Marssonina leaf spot fungus).